The following is a 210-amino-acid chain: MILHPSLASANPLHYGRELTALDNLDFGSLHLDIEDSSFINNITFGMKTVQAVARQTPHPLSFHFMLARPQRWFNALAEIRPAWIFVHAETLDYPSETLTEIRHTGARAGLVFNPATPIDAWRYLASELDGVMVMTSEPDGQGQRFIPSMCEKIQKVRTAFPQTECWADGGITLAAAQQLAAAGAQHMVIGRALFSSSDYRATLAQFATL.

A substrate-binding site is contributed by S6. A divalent metal cation is bound by residues H31, D33, and H64. The Proton acceptor role is filled by D33. Residues H64, 140-143 (DGQG), 169-171 (DGG), and 191-192 (GR) contribute to the substrate site. Position 169 (D169) interacts with a divalent metal cation. Catalysis depends on D169, which acts as the Proton donor.

This sequence belongs to the ribulose-phosphate 3-epimerase family. Co(2+) serves as cofactor. Fe(2+) is required as a cofactor. Requires Mn(2+) as cofactor. The cofactor is Zn(2+).

Its pathway is carbohydrate degradation. Probable pentose-5-phosphate 3-epimerase. This is Protein SgcE (sgcE) from Escherichia coli (strain K12).